The primary structure comprises 270 residues: MKMTSKKMKDELMKKLSRPEWDFHYDSEKEVLRIEQKDSKKGINVSLPGVVAKWEVNKEKAIEEVAYYVQEALIAMHKEENSAAKILPVIRSTSFPKQAEEGNPFIMTDHTAETRIYYALDSNKTYRLIDERLLKKLGLTEQQVREMALFNARSLGYEFKQDTVAGNTFYFLNTNDGYDATRILNESLLQSMREKISGDMVVAVPHQDVLIIADIVNEIGYDIIAQMTMKFFAEGHVPITSLSFVYEDGDFEPIFILAKNRKKTDGKEKG.

The protein belongs to the UPF0354 family.

The chain is UPF0354 protein BCAH820_4810 from Bacillus cereus (strain AH820).